The chain runs to 247 residues: Fibroblast growth factor 14 (247 aa).

2 disordered regions span residues 1–37 and 216–247; these read MAAA…SKNR and ETVP…CKTT. Over residues 15–25 the composition is skewed to basic and acidic residues; sequence QAREQHWDRPS.

The protein belongs to the heparin-binding growth factors family. In terms of assembly, interacts with SCN8A. Brain and testis; widely distributed in the developing nervous system. In adult, high levels in the granular layer of the cerebellum, less in hippocampus and olfactory bulb.

The protein resides in the nucleus. In terms of biological role, probably involved in nervous system development and function. This Mus musculus (Mouse) protein is Fibroblast growth factor 14 (Fgf14).